The primary structure comprises 42 residues: Protein YmiD (42 aa).

The protein is Protein YmiD of Escherichia coli (strain K12).